A 377-amino-acid chain; its full sequence is RIB43A-like with coiled-coils protein 2 (377 aa).

Residues N217 to L246 are a coiled coil. The segment at K354–R377 is disordered.

It belongs to the RIB43A family. In terms of assembly, microtubule inner protein component of sperm flagellar doublet microtubules.

The protein localises to the cytoplasm. It is found in the cytoskeleton. It localises to the cilium axoneme. Its subcellular location is the flagellum axoneme. Microtubule inner protein (MIP) part of the dynein-decorated doublet microtubules (DMTs) in cilia axoneme, which is required for motile cilia beating. In Mus musculus (Mouse), this protein is RIB43A-like with coiled-coils protein 2.